The primary structure comprises 612 residues: MTEGNQQKQFDSDSFLRHLTHQPGVYRMYDESGDVIYVGKAKDLRKRVSSYFREKVDRMKTQVLVKQIASMDVTVTNTEAEALILENSFIKKYRPRYNVLLRDDKSYPYIILTSHQHPKLGFHRGARRAKGDYFGPFPNGSAVRESLNLLQKLFPIRQCDDSYYRARTRPCLQYQLKRCLAPCVNVCTDDEYNEQVALAKQFLQGKNQQVIDELMNKMEQASTDLDFERAARFRDQIAALRKTQERNSVTGSQQELDVIGLARGNGMTTVQMLFIRDNHLQGSRSYFPKVPTDTPDDEVLRAFLLQFYLSDTAGRKIPREVVLPVDVQPDNVLAEVMSDALSQPVKLQSSVRGDKRQYQSLAQKNAVNALESRLNQQSTMNRRTQALQQVLEFGVPIQRMECFDISHTMGQQTVASCVVFDQNGPKKSDYRRYNITGITPGDDYAAMSKALAKRYDNAKEQGNIPDILFIDGGKGQLAQAENYFNDWGKEAPVLIGVAKGESRKPGLETLIMAGSHETIPLSKDASALHLIQHIRDESHRFAITGHRQKRAKVKKTSTLEQIDGVGAKRRQAILKNLGGLQEVKNASIDKLASVPGISRSLAEKIYYSFRDE.

A GIY-YIG domain is found at 21-99 (HQPGVYRMYD…IKKYRPRYNV (79 aa)). One can recognise a UVR domain in the interval 208 to 243 (QQVIDELMNKMEQASTDLDFERAARFRDQIAALRKT).

Belongs to the UvrC family. Interacts with UvrB in an incision complex.

The protein localises to the cytoplasm. Functionally, the UvrABC repair system catalyzes the recognition and processing of DNA lesions. UvrC both incises the 5' and 3' sides of the lesion. The N-terminal half is responsible for the 3' incision and the C-terminal half is responsible for the 5' incision. In Idiomarina loihiensis (strain ATCC BAA-735 / DSM 15497 / L2-TR), this protein is UvrABC system protein C.